Here is a 310-residue protein sequence, read N- to C-terminus: Ribosomal RNA small subunit methyltransferase H (310 aa).

Residues 32–34 (GGH), D52, F79, D100, and Q107 contribute to the S-adenosyl-L-methionine site.

The protein belongs to the methyltransferase superfamily. RsmH family.

The protein resides in the cytoplasm. The enzyme catalyses cytidine(1402) in 16S rRNA + S-adenosyl-L-methionine = N(4)-methylcytidine(1402) in 16S rRNA + S-adenosyl-L-homocysteine + H(+). Its function is as follows. Specifically methylates the N4 position of cytidine in position 1402 (C1402) of 16S rRNA. This is Ribosomal RNA small subunit methyltransferase H from Bacillus cytotoxicus (strain DSM 22905 / CIP 110041 / 391-98 / NVH 391-98).